A 387-amino-acid chain; its full sequence is Succinyl-diaminopimelate desuccinylase (387 aa).

A Zn(2+)-binding site is contributed by histidine 74. Aspartate 76 is an active-site residue. Residue aspartate 107 participates in Zn(2+) binding. The active-site Proton acceptor is the glutamate 142. Residues glutamate 143, glutamate 171, and histidine 360 each contribute to the Zn(2+) site.

This sequence belongs to the peptidase M20A family. DapE subfamily. As to quaternary structure, homodimer. Zn(2+) is required as a cofactor. Co(2+) serves as cofactor.

It carries out the reaction N-succinyl-(2S,6S)-2,6-diaminopimelate + H2O = (2S,6S)-2,6-diaminopimelate + succinate. It functions in the pathway amino-acid biosynthesis; L-lysine biosynthesis via DAP pathway; LL-2,6-diaminopimelate from (S)-tetrahydrodipicolinate (succinylase route): step 3/3. Its function is as follows. Catalyzes the hydrolysis of N-succinyl-L,L-diaminopimelic acid (SDAP), forming succinate and LL-2,6-diaminopimelate (DAP), an intermediate involved in the bacterial biosynthesis of lysine and meso-diaminopimelic acid, an essential component of bacterial cell walls. In Rhodopseudomonas palustris (strain TIE-1), this protein is Succinyl-diaminopimelate desuccinylase.